The chain runs to 82 residues: Sec-independent protein translocase protein TatA (82 aa).

Residues 1-21 (MGSFSIWHWLIVLLIVVMVFG) form a helical membrane-spanning segment. Residues 46–82 (GASTDDSATTSAPAGQVTNNSTAADKTTIDVEAKHKS) form a disordered region. A compositionally biased stretch (polar residues) spans 49–70 (TDDSATTSAPAGQVTNNSTAAD). Over residues 72-82 (TTIDVEAKHKS) the composition is skewed to basic and acidic residues.

This sequence belongs to the TatA/E family. As to quaternary structure, the Tat system comprises two distinct complexes: a TatABC complex, containing multiple copies of TatA, TatB and TatC subunits, and a separate TatA complex, containing only TatA subunits. Substrates initially bind to the TatABC complex, which probably triggers association of the separate TatA complex to form the active translocon.

It is found in the cell inner membrane. Part of the twin-arginine translocation (Tat) system that transports large folded proteins containing a characteristic twin-arginine motif in their signal peptide across membranes. TatA could form the protein-conducting channel of the Tat system. This Acidovorax sp. (strain JS42) protein is Sec-independent protein translocase protein TatA.